The chain runs to 254 residues: Tyrosine-protein phosphatase YwqE (254 aa).

Belongs to the metallo-dependent hydrolases superfamily. CpsB/CapC family. The cofactor is Mn(2+).

It carries out the reaction O-phospho-L-tyrosyl-[protein] + H2O = L-tyrosyl-[protein] + phosphate. Inhibited by vanadate and sodium pyrophosphate. Not inhibited by sodium fluoride. In terms of biological role, dephosphorylates the phosphotyrosine-containing proteins YwqD, YwqF and Ssb. The chain is Tyrosine-protein phosphatase YwqE (ywqE) from Bacillus subtilis (strain 168).